The following is a 291-amino-acid chain: MRYWGKLLGLALGIVSSTGIWGMIMGLLMGHWIDRARASRRRDYFSAQSTRQSLFFLTTFQAMGHLTKSKGRVTEADINIATKMMDRLELFGDARAAAQRAFREGKAGQFPLRIKLRKLRDACLGRFDLIKMFLEIQLQVAFVDGVLHPNERRVLYVIADELGVTREQFEFFLRNMESPTGQQSRQNQSRQNGKSQQRRNNGYSNGHSYGGQRPPSPLRGPTVESACRTLGVRSSDDAVTIKRAYRKLMSEHHPDKLVAKKLSPRMMEMAKRKAQDIQAAYELLKSANQTK.

Topologically, residues 1 to 6 are periplasmic; it reads MRYWGK. A helical transmembrane segment spans residues 7–31; sequence LLGLALGIVSSTGIWGMIMGLLMGH. Residues 32–291 lie on the Cytoplasmic side of the membrane; sequence WIDRARASRR…ELLKSANQTK (260 aa). Positions 177–223 are disordered; the sequence is ESPTGQQSRQNQSRQNGKSQQRRNNGYSNGHSYGGQRPPSPLRGPTV. Positions 181-211 are enriched in low complexity; sequence GQQSRQNQSRQNGKSQQRRNNGYSNGHSYGG. In terms of domain architecture, J spans 225 to 291; the sequence is SACRTLGVRS…ELLKSANQTK (67 aa).

In terms of assembly, homodimer.

It localises to the cell inner membrane. In terms of biological role, regulatory DnaK co-chaperone. Direct interaction between DnaK and DjlA is needed for the induction of the wcaABCDE operon, involved in the synthesis of a colanic acid polysaccharide capsule, possibly through activation of the RcsB/RcsC phosphotransfer signaling pathway. The colanic acid capsule may help the bacterium survive conditions outside the host. This is Co-chaperone protein DjlA from Pectobacterium atrosepticum (strain SCRI 1043 / ATCC BAA-672) (Erwinia carotovora subsp. atroseptica).